The following is a 366-amino-acid chain: Chalcone synthase B (366 aa).

The active site involves cysteine 172.

The protein belongs to the thiolase-like superfamily. Chalcone/stilbene synthases family.

It catalyses the reaction (E)-4-coumaroyl-CoA + 3 malonyl-CoA + 3 H(+) = 2',4,4',6'-tetrahydroxychalcone + 3 CO2 + 4 CoA. It participates in secondary metabolite biosynthesis; flavonoid biosynthesis. In terms of biological role, the primary product of this enzyme is 4,2',4',6'-tetrahydroxychalcone (also termed naringenin-chalcone or chalcone) which can under specific conditions spontaneously isomerize into naringenin. The chain is Chalcone synthase B (CHSB) from Ipomoea trifida (Morning glory).